Reading from the N-terminus, the 147-residue chain is HTH-type transcriptional regulator MntR (147 aa).

The HTH dtxR-type domain maps to 1–63; that stretch reads MPTPSMEDYI…YEKYRGFVLT (63 aa). Residues Asp-8, Glu-11, His-77, Glu-99, Glu-102, and His-103 each contribute to the Mn(2+) site.

This sequence belongs to the DtxR/MntR family. Homodimer.

The protein localises to the cytoplasm. DNA binding is strongly activated by Mn(2+). Its function is as follows. Central regulator of manganese homeostasis. The sequence is that of HTH-type transcriptional regulator MntR from Oceanobacillus iheyensis (strain DSM 14371 / CIP 107618 / JCM 11309 / KCTC 3954 / HTE831).